The primary structure comprises 95 residues: MGLERDEILSQDLHFNEVFISLWQNRLTRYEIARVISARALQLAMGAPALIDINNLSSTDVISIAEEEFRRGVLPITIRRRLPNGKIILLSLRKS.

It belongs to the archaeal Rpo6/eukaryotic RPB6 RNA polymerase subunit family. Part of the 13-subunit RNA polymerase complex.

The protein localises to the cytoplasm. The enzyme catalyses RNA(n) + a ribonucleoside 5'-triphosphate = RNA(n+1) + diphosphate. Its function is as follows. DNA-dependent RNA polymerase (RNAP) catalyzes the transcription of DNA into RNA using the four ribonucleoside triphosphates as substrates. The chain is DNA-directed RNA polymerase subunit Rpo6 from Saccharolobus solfataricus (strain ATCC 35092 / DSM 1617 / JCM 11322 / P2) (Sulfolobus solfataricus).